We begin with the raw amino-acid sequence, 526 residues long: Nucleolar complex protein 4 homolog A (526 aa).

Helical transmembrane passes span 307-327 (AAYD…FILI), 358-378 (FFHL…LVAA), and 386-406 (LALT…CNLI).

It belongs to the CBF/MAK21 family.

It localises to the nucleus membrane. The protein localises to the nucleus. The protein resides in the nucleolus. In Xenopus laevis (African clawed frog), this protein is Nucleolar complex protein 4 homolog A (noc4l-a).